The following is a 349-amino-acid chain: Peroxidase 23 (349 aa).

The N-terminal stretch at 1-29 (MGFSSSLSCSAMGALIVGCLLLQASNSNA) is a signal peptide. A Pyrrolidone carboxylic acid modification is found at Q30. 4 disulfides stabilise this stretch: C40-C120, C73-C78, C126-C329, and C206-C238. H71 (proton acceptor) is an active-site residue. Residues D72, V75, G77, D79, and S81 each contribute to the Ca(2+) site. N86 carries N-linked (GlcNAc...) asparagine glycosylation. Position 168 (P168) interacts with substrate. A heme b-binding site is contributed by H199. Ca(2+) is bound at residue T200. Residues N217 and N243 are each glycosylated (N-linked (GlcNAc...) asparagine). 3 residues coordinate Ca(2+): D251, T254, and D259.

This sequence belongs to the peroxidase family. Classical plant (class III) peroxidase subfamily. Heme b is required as a cofactor. Requires Ca(2+) as cofactor.

The protein localises to the secreted. Its subcellular location is the vacuole. It carries out the reaction 2 a phenolic donor + H2O2 = 2 a phenolic radical donor + 2 H2O. Its function is as follows. Removal of H(2)O(2), oxidation of toxic reductants, biosynthesis and degradation of lignin, suberization, auxin catabolism, response to environmental stresses such as wounding, pathogen attack and oxidative stress. These functions might be dependent on each isozyme/isoform in each plant tissue. The chain is Peroxidase 23 (PER23) from Arabidopsis thaliana (Mouse-ear cress).